Reading from the N-terminus, the 712-residue chain is Polyribonucleotide nucleotidyltransferase (712 aa).

Mg(2+) contacts are provided by aspartate 487 and aspartate 493. The 60-residue stretch at proline 554–isoleucine 613 folds into the KH domain. The region spanning glycine 623–lysine 691 is the S1 motif domain.

The protein belongs to the polyribonucleotide nucleotidyltransferase family. Mg(2+) serves as cofactor.

The protein localises to the cytoplasm. The catalysed reaction is RNA(n+1) + phosphate = RNA(n) + a ribonucleoside 5'-diphosphate. In terms of biological role, involved in mRNA degradation. Catalyzes the phosphorolysis of single-stranded polyribonucleotides processively in the 3'- to 5'-direction. The protein is Polyribonucleotide nucleotidyltransferase of Rhizobium johnstonii (strain DSM 114642 / LMG 32736 / 3841) (Rhizobium leguminosarum bv. viciae).